The following is an 84-amino-acid chain: Serine protease inhibitor Kazal-type 2 (84 aa).

A signal peptide spans 1 to 23; it reads MALSVLRLALLLLAVTFAASLIP. Position 24 is a pyrrolidone carboxylic acid (Gln-24). Residues 30–84 enclose the Kazal-like domain; that stretch reads KYRTPNCSQYRLPGCPRHFNPVCGSDMSTYANECTLCMKIREGGHNIKIIRNGPC. Disulfide bonds link Cys-36/Cys-66, Cys-44/Cys-63, and Cys-52/Cys-84.

In terms of tissue distribution, expressed in epididymis (at protein level).

The protein resides in the secreted. It localises to the cytoplasmic vesicle. The protein localises to the secretory vesicle. It is found in the acrosome. In terms of biological role, as a strong inhibitor of acrosin, it is required for normal spermiogenesis. It probably hinders premature activation of proacrosin and other proteases, thus preventing the cascade of events leading to spermiogenesis defects. May be involved in the regulation of serine protease-dependent germ cell apoptosis. It also inhibits trypsin. The protein is Serine protease inhibitor Kazal-type 2 (SPINK2) of Homo sapiens (Human).